We begin with the raw amino-acid sequence, 551 residues long: Monocarboxylic acid transporter (551 aa).

The next 13 helical transmembrane spans lie at 18–38, 63–83, 90–110, 144–164, 171–191, 203–223, 267–287, 307–327, 355–375, 411–431, 432–452, 463–483, and 503–523; these read NPIL…TVVL, GLAI…VGAI, GFLY…LVAE, VTLF…SVLL, WQAV…LLGG, AVLL…KVSG, LDFI…PHVL, IVLI…AAAL, IFMA…VAGL, VVIG…NVAF, LVAL…LYSL, VAAI…SPAV, and NPGL…TLVG.

The protein belongs to the sodium:solute symporter (SSF) (TC 2.A.21) family.

It is found in the cell membrane. Its function is as follows. Acts as a secondary carrier for acetate, propionate and pyruvate. Has high affinity for acetate and propionate and lower affinity for pyruvate. Driven by the electrochemical proton potential. In Corynebacterium glutamicum (strain ATCC 13032 / DSM 20300 / JCM 1318 / BCRC 11384 / CCUG 27702 / LMG 3730 / NBRC 12168 / NCIMB 10025 / NRRL B-2784 / 534), this protein is Monocarboxylic acid transporter.